A 618-amino-acid chain; its full sequence is Chaperone protein DnaK (618 aa).

T175 is subject to Phosphothreonine; by autocatalysis. The tract at residues 576 to 618 (SQNAEPGADGGANSGANPGGTTGNTDTKDDNVVDAEYKVDDDK) is disordered. The span at 583 to 597 (ADGGANSGANPGGTT) shows a compositional bias: gly residues. Basic and acidic residues predominate over residues 601-618 (DTKDDNVVDAEYKVDDDK).

Belongs to the heat shock protein 70 family.

In terms of biological role, acts as a chaperone. The chain is Chaperone protein DnaK from Clostridium kluyveri (strain NBRC 12016).